A 37-amino-acid chain; its full sequence is Bactericidin B-2 (37 aa).

Residue Gly-37 is modified to Glycine amide.

This sequence belongs to the cecropin family.

It is found in the secreted. Functionally, cecropins have lytic and antibacterial activity against several Gram-positive and Gram-negative bacteria. The chain is Bactericidin B-2 from Manduca sexta (Tobacco hawkmoth).